A 215-amino-acid chain; its full sequence is Probable GTP-binding protein EngB (215 aa).

Positions 26–200 (EGIEVAFAGR…RAKLDEWFAP (175 aa)) constitute an EngB-type G domain. GTP-binding positions include 34–41 (GRSNAGKS), 61–65 (GRTQL), 79–82 (DLPG), 146–149 (TKAD), and 179–181 (FSS). Mg(2+) contacts are provided by Ser41 and Thr63.

This sequence belongs to the TRAFAC class TrmE-Era-EngA-EngB-Septin-like GTPase superfamily. EngB GTPase family. Mg(2+) serves as cofactor.

In terms of biological role, necessary for normal cell division and for the maintenance of normal septation. This Aliivibrio fischeri (strain ATCC 700601 / ES114) (Vibrio fischeri) protein is Probable GTP-binding protein EngB.